A 429-amino-acid chain; its full sequence is Adenylosuccinate synthetase (429 aa).

Residues 12 to 18 (GDEGKGK) and 40 to 42 (GHT) each bind GTP. D13 (proton acceptor) is an active-site residue. D13 and G40 together coordinate Mg(2+). IMP contacts are provided by residues 13–16 (DEGK), 38–41 (NAGH), T128, R142, Q223, T238, and R302. Catalysis depends on H41, which acts as the Proton donor. 298–304 (TTTGRPR) provides a ligand contact to substrate. GTP contacts are provided by residues R304, 330 to 332 (SID), and 412 to 414 (SVG).

The protein belongs to the adenylosuccinate synthetase family. In terms of assembly, homodimer. Mg(2+) serves as cofactor.

It is found in the cytoplasm. The enzyme catalyses IMP + L-aspartate + GTP = N(6)-(1,2-dicarboxyethyl)-AMP + GDP + phosphate + 2 H(+). Its pathway is purine metabolism; AMP biosynthesis via de novo pathway; AMP from IMP: step 1/2. Plays an important role in the de novo pathway of purine nucleotide biosynthesis. Catalyzes the first committed step in the biosynthesis of AMP from IMP. In Bacillus thuringiensis (strain Al Hakam), this protein is Adenylosuccinate synthetase.